Reading from the N-terminus, the 246-residue chain is Probable transcriptional regulatory protein Dole_0371 (246 aa).

This sequence belongs to the TACO1 family.

The protein resides in the cytoplasm. This is Probable transcriptional regulatory protein Dole_0371 from Desulfosudis oleivorans (strain DSM 6200 / JCM 39069 / Hxd3) (Desulfococcus oleovorans).